A 133-amino-acid chain; its full sequence is Small ribosomal subunit protein uS8 (133 aa).

Belongs to the universal ribosomal protein uS8 family. Part of the 30S ribosomal subunit. Contacts proteins S5 and S12.

In terms of biological role, one of the primary rRNA binding proteins, it binds directly to 16S rRNA central domain where it helps coordinate assembly of the platform of the 30S subunit. The chain is Small ribosomal subunit protein uS8 from Chlamydia trachomatis serovar L2b (strain UCH-1/proctitis).